The following is a 171-amino-acid chain: Putative pre-16S rRNA nuclease (171 aa).

Belongs to the YqgF nuclease family.

Its subcellular location is the cytoplasm. Its function is as follows. Could be a nuclease involved in processing of the 5'-end of pre-16S rRNA. The protein is Putative pre-16S rRNA nuclease of Corynebacterium diphtheriae (strain ATCC 700971 / NCTC 13129 / Biotype gravis).